The primary structure comprises 680 residues: Enzymatic polyprotein (680 aa).

A protease region spans residues 41–131 (LHCFVDTGAS…LYEPFIQFTD (91 aa)). Aspartate 46 is a catalytic residue. A Reverse transcriptase domain is found at 273–453 (LKVIKPSKSP…KKINFLGLEI (181 aa)).

This sequence belongs to the caulimoviridae enzymatic polyprotein family.

The enzyme catalyses DNA(n) + a 2'-deoxyribonucleoside 5'-triphosphate = DNA(n+1) + diphosphate. Its function is as follows. Encodes for at least two polypeptides: protease (PR) and reverse transcriptase (RT). The protease processes the polyprotein in cis. Reverse transcriptase is multifunctional enzyme that converts the viral RNA genome into dsDNA in viral cytoplasmic capsids. This enzyme displays a DNA polymerase activity that can copy either DNA or RNA templates, and a ribonuclease H (RNase H) activity that cleaves the RNA strand of RNA-DNA heteroduplexes in a partially processive 3'- to 5'-endonucleasic mode. Neo-synthesized pregenomic RNA (pgRNA) are encapsidated, and reverse-transcribed inside the nucleocapsid. Partial (+)DNA is synthesized from the (-)DNA template and generates the relaxed circular DNA (RC-DNA) genome. After budding and infection, the RC-DNA migrates in the nucleus, and is converted into a plasmid-like covalently closed circular DNA (cccDNA). This is Enzymatic polyprotein from Cauliflower mosaic virus (strain NY8153) (CaMV).